The following is a 413-amino-acid chain: Lipoyl synthase, mitochondrial (413 aa).

Residues 1–33 (MAAATNRFRALYSSSRVATPQAGSASYLSYRGY) constitute a mitochondrion transit peptide. Residues Cys-133, Cys-138, Cys-144, Cys-164, Cys-168, Cys-171, and Ser-379 each contribute to the [4Fe-4S] cluster site. Residues 147-368 (GGDKAAATAT…RQRALDMGFL (222 aa)) enclose the Radical SAM core domain.

Belongs to the radical SAM superfamily. Lipoyl synthase family. The cofactor is [4Fe-4S] cluster.

It localises to the mitochondrion. It carries out the reaction [[Fe-S] cluster scaffold protein carrying a second [4Fe-4S](2+) cluster] + N(6)-octanoyl-L-lysyl-[protein] + 2 oxidized [2Fe-2S]-[ferredoxin] + 2 S-adenosyl-L-methionine + 4 H(+) = [[Fe-S] cluster scaffold protein] + N(6)-[(R)-dihydrolipoyl]-L-lysyl-[protein] + 4 Fe(3+) + 2 hydrogen sulfide + 2 5'-deoxyadenosine + 2 L-methionine + 2 reduced [2Fe-2S]-[ferredoxin]. It functions in the pathway protein modification; protein lipoylation via endogenous pathway; protein N(6)-(lipoyl)lysine from octanoyl-[acyl-carrier-protein]: step 2/2. In terms of biological role, catalyzes the radical-mediated insertion of two sulfur atoms into the C-6 and C-8 positions of the octanoyl moiety bound to the lipoyl domains of lipoate-dependent enzymes, thereby converting the octanoylated domains into lipoylated derivatives. The protein is Lipoyl synthase, mitochondrial of Emericella nidulans (strain FGSC A4 / ATCC 38163 / CBS 112.46 / NRRL 194 / M139) (Aspergillus nidulans).